The chain runs to 542 residues: Chaperonin GroEL (542 aa).

ATP contacts are provided by residues 29–32 (TLGP), 86–90 (DGTTT), G413, and D494.

This sequence belongs to the chaperonin (HSP60) family. In terms of assembly, forms a cylinder of 14 subunits composed of two heptameric rings stacked back-to-back. Interacts with the co-chaperonin GroES.

The protein resides in the cytoplasm. It catalyses the reaction ATP + H2O + a folded polypeptide = ADP + phosphate + an unfolded polypeptide.. Functionally, together with its co-chaperonin GroES, plays an essential role in assisting protein folding. The GroEL-GroES system forms a nano-cage that allows encapsulation of the non-native substrate proteins and provides a physical environment optimized to promote and accelerate protein folding. In Endomicrobium trichonymphae, this protein is Chaperonin GroEL.